The primary structure comprises 235 residues: Ribonuclease S-2 (235 aa).

The first 31 residues, 1–31 (MATVQKSQHSHFFLLVGCIVHLSNFCSTTTA), serve as a signal peptide directing secretion. Q41 provides a ligand contact to RNA. C47 and C54 are disulfide-bonded. An RNA-binding site is contributed by H66. H66 acts as the Proton donor in catalysis. N-linked (GlcNAc...) asparagine glycosylation occurs at N72. 3 disulfides stabilise this stretch: C80–C129, C189–C217, and C200–C211. Residues 105–106 (DL), R108, and F118 contribute to the RNA site. Q122 is an active-site residue. Position 125-126 (125-126 (KH)) interacts with RNA. The active-site Proton acceptor is the H126.

Belongs to the RNase T2 family.

The protein localises to the secreted. Its subcellular location is the extracellular space. The catalysed reaction is a ribonucleotidyl-ribonucleotide-RNA + H2O = a 3'-end 3'-phospho-ribonucleotide-RNA + a 5'-end dephospho-ribonucleoside-RNA + H(+). Its function is as follows. Self-incompatibility (SI) is the inherited ability of a flowering plant to prevent self-fertilization by discriminating between self and non-self pollen during pollination. In many species, self-incompatibility is controlled by the single, multiallelic locus S. This chain is Ribonuclease S-2 (S2), found in Antirrhinum hispanicum (Snapdragon).